A 456-amino-acid polypeptide reads, in one-letter code: Glutathione reductase (456 aa).

FAD contacts are provided by serine 14, glycine 15, glutamate 34, threonine 41, cysteine 42, and lysine 50. Residue serine 14 participates in glutathione binding. The cysteines at positions 42 and 47 are disulfide-linked. Glutathione is bound at residue tyrosine 99. Position 115 (glycine 115) interacts with FAD. Positions 180, 183, 186, 203, 209, and 267 each coordinate NADP(+). Aspartate 308 is an FAD binding site. Glutamate 315 lines the NADP(+) pocket. An FAD-binding site is contributed by threonine 317. Arginine 325 is a glutathione binding site. Residue valine 348 participates in NADP(+) binding. Histidine 445 contributes to the FAD binding site. Catalysis depends on histidine 445, which acts as the Proton acceptor.

It belongs to the class-I pyridine nucleotide-disulfide oxidoreductase family. As to quaternary structure, homodimer. FAD serves as cofactor.

The protein resides in the cytoplasm. The catalysed reaction is 2 glutathione + NADP(+) = glutathione disulfide + NADPH + H(+). In terms of biological role, catalyzes the reduction of glutathione disulfide (GSSG) to reduced glutathione (GSH). Constitutes the major mechanism to maintain a high GSH:GSSG ratio in the cytosol. This chain is Glutathione reductase (gor), found in Haemophilus influenzae (strain ATCC 51907 / DSM 11121 / KW20 / Rd).